The sequence spans 435 residues: ATP-dependent protease ATPase subunit HslU (435 aa).

ATP contacts are provided by residues valine 18, glycine 60 to glutamate 65, aspartate 248, glutamate 313, and arginine 385.

This sequence belongs to the ClpX chaperone family. HslU subfamily. In terms of assembly, a double ring-shaped homohexamer of HslV is capped on each side by a ring-shaped HslU homohexamer. The assembly of the HslU/HslV complex is dependent on binding of ATP.

The protein localises to the cytoplasm. In terms of biological role, ATPase subunit of a proteasome-like degradation complex; this subunit has chaperone activity. The binding of ATP and its subsequent hydrolysis by HslU are essential for unfolding of protein substrates subsequently hydrolyzed by HslV. HslU recognizes the N-terminal part of its protein substrates and unfolds these before they are guided to HslV for hydrolysis. This is ATP-dependent protease ATPase subunit HslU from Rhodospirillum rubrum (strain ATCC 11170 / ATH 1.1.1 / DSM 467 / LMG 4362 / NCIMB 8255 / S1).